The chain runs to 398 residues: Elongation factor Tu (398 aa).

Residues lysine 10 to glutamate 207 form the tr-type G domain. The G1 stretch occupies residues glycine 19–threonine 26. Glycine 19–threonine 26 contributes to the GTP binding site. Threonine 26 lines the Mg(2+) pocket. Positions glycine 63 to asparagine 67 are G2. The tract at residues aspartate 84–glycine 87 is G3. GTP-binding positions include aspartate 84–histidine 88 and asparagine 139–aspartate 142. The G4 stretch occupies residues asparagine 139–aspartate 142. Residues serine 177 to leucine 179 are G5.

It belongs to the TRAFAC class translation factor GTPase superfamily. Classic translation factor GTPase family. EF-Tu/EF-1A subfamily. As to quaternary structure, monomer.

It is found in the cytoplasm. The enzyme catalyses GTP + H2O = GDP + phosphate + H(+). In terms of biological role, GTP hydrolase that promotes the GTP-dependent binding of aminoacyl-tRNA to the A-site of ribosomes during protein biosynthesis. This Streptococcus thermophilus (strain CNRZ 1066) protein is Elongation factor Tu.